The primary structure comprises 221 residues: Enolase-phosphatase E1 (221 aa).

Positions 9 and 11 each coordinate Mg(2+). Substrate contacts are provided by residues 116-117 (SS) and Lys-152. Asp-180 is a Mg(2+) binding site.

Belongs to the HAD-like hydrolase superfamily. MasA/MtnC family. In terms of assembly, monomer. Mg(2+) is required as a cofactor.

The protein resides in the cytoplasm. It localises to the nucleus. The enzyme catalyses 5-methylsulfanyl-2,3-dioxopentyl phosphate + H2O = 1,2-dihydroxy-5-(methylsulfanyl)pent-1-en-3-one + phosphate. The protein operates within amino-acid biosynthesis; L-methionine biosynthesis via salvage pathway; L-methionine from S-methyl-5-thio-alpha-D-ribose 1-phosphate: step 3/6. Its pathway is amino-acid biosynthesis; L-methionine biosynthesis via salvage pathway; L-methionine from S-methyl-5-thio-alpha-D-ribose 1-phosphate: step 4/6. Functionally, bifunctional enzyme that catalyzes the enolization of 2,3-diketo-5-methylthiopentyl-1-phosphate (DK-MTP-1-P) into the intermediate 2-hydroxy-3-keto-5-methylthiopentenyl-1-phosphate (HK-MTPenyl-1-P), which is then dephosphorylated to form the acireductone 1,2-dihydroxy-3-keto-5-methylthiopentene (DHK-MTPene). The sequence is that of Enolase-phosphatase E1 from Kluyveromyces lactis (strain ATCC 8585 / CBS 2359 / DSM 70799 / NBRC 1267 / NRRL Y-1140 / WM37) (Yeast).